Here is a 942-residue protein sequence, read N- to C-terminus: Glutamyl aminopeptidase (942 aa).

The Cytoplasmic segment spans residues 1–14; sequence MSTDSKRYCIKTKH. Residues 15–35 traverse the membrane as a helical; Signal-anchor for type II membrane protein segment; that stretch reads VAIICAAVVAVGLIVGLSVGL. The Extracellular segment spans residues 36 to 942; that stretch reads TRSCDSKDGG…RDTIRDWFFN (907 aa). Positions 40–74 are disordered; it reads DSKDGGQGTTQSPSHLPPTSSPPQDQGVCPASEDE. 3 N-linked (GlcNAc...) asparagine glycosylation sites follow: Asn-110, Asn-114, and Asn-187. Residue Glu-213 coordinates substrate. Residue Asn-314 is glycosylated (N-linked (GlcNAc...) asparagine). 347–351 provides a ligand contact to substrate; the sequence is GAMEN. A glycan (N-linked (GlcNAc...) asparagine) is linked at Asn-367. His-383 contacts Zn(2+). The Proton acceptor role is filled by Glu-384. Residues His-387 and Glu-406 each coordinate Zn(2+). N-linked (GlcNAc...) asparagine glycans are attached at residues Asn-557, Asn-579, Asn-587, Asn-597, Asn-632, Asn-668, Asn-753, Asn-786, and Asn-791. Arg-877 is a binding site for substrate.

This sequence belongs to the peptidase M1 family. Homodimer; disulfide-linked. Requires Zn(2+) as cofactor.

The protein localises to the cell membrane. The enzyme catalyses Release of N-terminal glutamate (and to a lesser extent aspartate) from a peptide.. With respect to regulation, substrate specificity is modulated by calcium which enhances the enzymatic activity for cleavage of acidic residues while reducing its activity with basic residues. Inhibited by aminopeptidase inhibitors amastatin and bestatin. Regulates central hypertension through its calcium-modulated preference to cleave N-terminal acidic residues from peptides such as angiotensin II. The polypeptide is Glutamyl aminopeptidase (ENPEP) (Sus scrofa (Pig)).